Here is a 478-residue protein sequence, read N- to C-terminus: MKERSVSNFDIVIFGVTGNLSRKKLIPSLFNLFKNKCISNFRVIGFSRKIFTDKEFRLYIKDSLWQEETDSLIEIFLNFFVYVFGDFNEKESYKNLFKFLDRSRETIYYLSTSPAFYGPIINHLKKYFLSEKLTLSKIVLEKPFGSSLETAKKLNSLLYSAFKEDQIYRIDHYLGKETVQNIFTFRFGNSIFENIWNNRYVDFVQITVAEELGLDGRVEYYDSVGALKDMVQNHILQLLSLVAMESPIKFDSEFIHDEKVKVLKSLRKISKEDIKNYIVKGQYIGSQVQGVFKKGYKDETEFLGNSNTETYLAMKVFINNWRWSGVPFYLRTGKGLARKFSEIYIQFKKPSFTLFNNSSVDFSNALIFRIQPRDGIEIKFNTKKPGYNYEIQTANMEFSYHGAFKRLFDEAYERLLLDAFLGDGTLYATSDEIESSWEFVSDIANKWADIEICNYFYGSEGPKEIDSILEKDHFWRKI.

Residues R48, 86–87 (DF), and K142 each bind NADP(+). Substrate-binding residues include H172, K176, E210, and D229. The active-site Proton acceptor is the H234. Positions 334 and 339 each coordinate substrate.

The protein belongs to the glucose-6-phosphate dehydrogenase family.

It catalyses the reaction D-glucose 6-phosphate + NADP(+) = 6-phospho-D-glucono-1,5-lactone + NADPH + H(+). Its pathway is carbohydrate degradation; pentose phosphate pathway; D-ribulose 5-phosphate from D-glucose 6-phosphate (oxidative stage): step 1/3. Functionally, catalyzes the oxidation of glucose 6-phosphate to 6-phosphogluconolactone. This chain is Glucose-6-phosphate 1-dehydrogenase, found in Borreliella burgdorferi (strain ATCC 35210 / DSM 4680 / CIP 102532 / B31) (Borrelia burgdorferi).